Reading from the N-terminus, the 199-residue chain is dITP/XTP pyrophosphatase (199 aa).

Position 8–13 (8–13) interacts with substrate; that stretch reads SGNAGK. Aspartate 69 acts as the Proton acceptor in catalysis. A Mg(2+)-binding site is contributed by aspartate 69. Substrate contacts are provided by residues serine 70, 154–157, lysine 177, and 182–183; these read FGYN and HR.

The protein belongs to the HAM1 NTPase family. Homodimer. Mg(2+) serves as cofactor.

The enzyme catalyses XTP + H2O = XMP + diphosphate + H(+). It catalyses the reaction dITP + H2O = dIMP + diphosphate + H(+). The catalysed reaction is ITP + H2O = IMP + diphosphate + H(+). Its function is as follows. Pyrophosphatase that catalyzes the hydrolysis of nucleoside triphosphates to their monophosphate derivatives, with a high preference for the non-canonical purine nucleotides XTP (xanthosine triphosphate), dITP (deoxyinosine triphosphate) and ITP. Seems to function as a house-cleaning enzyme that removes non-canonical purine nucleotides from the nucleotide pool, thus preventing their incorporation into DNA/RNA and avoiding chromosomal lesions. This Xanthomonas campestris pv. campestris (strain 8004) protein is dITP/XTP pyrophosphatase.